We begin with the raw amino-acid sequence, 347 residues long: NADH-ubiquinone oxidoreductase chain 2 (347 aa).

The next 10 membrane-spanning stretches (helical) occupy residues 3 to 23 (PIVFSTILTTAIMGTVIVMMS), 25 to 45 (HWLMVWIGFEMNLLAIIPILM), 59 to 79 (YFLTQATASMLLMSAIIINLM), 111 to 131 (FHFWVPEVTQGISLMSGLILL), 149 to 169 (INLDMLMTSALLSILVGGWGG), 178 to 198 (IMAYSSIAHMGWMTAILTYNP), 201 to 221 (TMLNMLIYIMMTLTTFMLLML), 242 to 262 (SLILIIMLSLGGLPPLSGFIP), 274 to 294 (NSIILPTSMAIMALLNLYFYL), and 325 to 345 (LLPTLIIMSTLLLPLMPTMSI).

It belongs to the complex I subunit 2 family. Core subunit of respiratory chain NADH dehydrogenase (Complex I) which is composed of 45 different subunits. Interacts with TMEM242.

It is found in the mitochondrion inner membrane. It catalyses the reaction a ubiquinone + NADH + 5 H(+)(in) = a ubiquinol + NAD(+) + 4 H(+)(out). Functionally, core subunit of the mitochondrial membrane respiratory chain NADH dehydrogenase (Complex I) which catalyzes electron transfer from NADH through the respiratory chain, using ubiquinone as an electron acceptor. Essential for the catalytic activity and assembly of complex I. This Rhinoceros unicornis (Greater Indian rhinoceros) protein is NADH-ubiquinone oxidoreductase chain 2.